An 88-amino-acid polypeptide reads, in one-letter code: Small ribosomal subunit protein bS16c (88 aa).

Belongs to the bacterial ribosomal protein bS16 family.

The protein localises to the plastid. It localises to the chloroplast. This Oenothera elata subsp. hookeri (Hooker's evening primrose) protein is Small ribosomal subunit protein bS16c.